Here is a 1546-residue protein sequence, read N- to C-terminus: Mediator of RNA polymerase II transcription subunit 14 (1546 aa).

2 short sequence motifs (LXXLL motif) span residues 51–55 (LAELL) and 468–472 (LPSLL). Disordered stretches follow at residues 692–717 (KSAT…PSGS), 1000–1193 (GRAP…NRPW), and 1512–1546 (NPMM…GGPQ). Composition is skewed to low complexity over residues 693-717 (SATA…PSGS), 1020-1035 (GGPS…GSSP), and 1061-1075 (PSSS…PHPS). Pro residues predominate over residues 1093–1102 (PPAPHMPHPS). A compositionally biased stretch (polar residues) spans 1125-1149 (GPNTLYMQSHQDSPFTAMSPANNQW). Residues 1153–1163 (PSMPRPSPRPG) show a composition bias toward pro residues. Over residues 1515–1527 (MPMQQLQPQVGPQ) the composition is skewed to low complexity.

It belongs to the Mediator complex subunit 14 family. In terms of assembly, component of the Mediator complex.

The protein resides in the nucleus. Functionally, component of the Mediator complex, a coactivator involved in the regulated transcription of nearly all RNA polymerase II-dependent genes. Mediator functions as a bridge to convey information from gene-specific regulatory proteins to the basal RNA polymerase II transcription machinery. Mediator is recruited to promoters by direct interactions with regulatory proteins and serves as a scaffold for the assembly of a functional preinitiation complex with RNA polymerase II and the general transcription factors. This is Mediator of RNA polymerase II transcription subunit 14 (MED14) from Drosophila pseudoobscura pseudoobscura (Fruit fly).